Reading from the N-terminus, the 426-residue chain is Glutamate-1-semialdehyde 2,1-aminomutase (426 aa).

An N6-(pyridoxal phosphate)lysine modification is found at lysine 268.

Belongs to the class-III pyridoxal-phosphate-dependent aminotransferase family. HemL subfamily. Pyridoxal 5'-phosphate serves as cofactor.

It is found in the cytoplasm. The enzyme catalyses (S)-4-amino-5-oxopentanoate = 5-aminolevulinate. It participates in porphyrin-containing compound metabolism; protoporphyrin-IX biosynthesis; 5-aminolevulinate from L-glutamyl-tRNA(Glu): step 2/2. The protein is Glutamate-1-semialdehyde 2,1-aminomutase of Saccharolobus islandicus (strain Y.N.15.51 / Yellowstone #2) (Sulfolobus islandicus).